Reading from the N-terminus, the 338-residue chain is Glycerol-3-phosphate dehydrogenase [NAD(P)+] (338 aa).

Residues Ser-13, Trp-14, and Lys-108 each coordinate NADPH. The sn-glycerol 3-phosphate site is built by Lys-108, Gly-139, and Ser-141. Position 143 (Ala-143) interacts with NADPH. Positions 194, 247, 257, 258, and 259 each coordinate sn-glycerol 3-phosphate. Lys-194 serves as the catalytic Proton acceptor. Position 258 (Arg-258) interacts with NADPH. 2 residues coordinate NADPH: Val-282 and Glu-284.

Belongs to the NAD-dependent glycerol-3-phosphate dehydrogenase family.

The protein resides in the cytoplasm. It carries out the reaction sn-glycerol 3-phosphate + NAD(+) = dihydroxyacetone phosphate + NADH + H(+). The enzyme catalyses sn-glycerol 3-phosphate + NADP(+) = dihydroxyacetone phosphate + NADPH + H(+). It functions in the pathway membrane lipid metabolism; glycerophospholipid metabolism. Catalyzes the reduction of the glycolytic intermediate dihydroxyacetone phosphate (DHAP) to sn-glycerol 3-phosphate (G3P), the key precursor for phospholipid synthesis. The protein is Glycerol-3-phosphate dehydrogenase [NAD(P)+] of Listeria monocytogenes serotype 4b (strain CLIP80459).